We begin with the raw amino-acid sequence, 720 residues long: Engulfment and cell motility protein 3 (720 aa).

Residues 307–479 (EQREQLQALR…VVREQLARTL (173 aa)) enclose the ELMO domain. Residues 541–663 (LRLCEGMLFR…WTDGLSALLG (123 aa)) enclose the PH domain.

Probably interacts directly with the SH3-domain of DOCK1 via its SH3-binding site. Part of a complex with DOCK1 and RAC1. Interacts with ADGRB3.

Its subcellular location is the cytoplasm. Its function is as follows. Involved in cytoskeletal rearrangements required for phagocytosis of apoptotic cells and cell motility. Acts in association with DOCK1 and CRK. Was initially proposed to be required in complex with DOCK1 to activate Rac Rho small GTPases. May enhance the guanine nucleotide exchange factor (GEF) activity of DOCK1. The polypeptide is Engulfment and cell motility protein 3 (Elmo3) (Rattus norvegicus (Rat)).